The sequence spans 426 residues: Serine--tRNA ligase (426 aa).

The segment at 36-66 (KRRHLQERTQDLQSQRNTISKEIGQKKAKGE) is disordered. Polar residues predominate over residues 46-55 (DLQSQRNTIS). Residue 233–235 (TAE) coordinates L-serine. 264–266 (RSE) is a binding site for ATP. Position 287 (glutamate 287) interacts with L-serine. Residue 351 to 354 (EISS) coordinates ATP. Serine 387 lines the L-serine pocket.

It belongs to the class-II aminoacyl-tRNA synthetase family. Type-1 seryl-tRNA synthetase subfamily. In terms of assembly, homodimer. The tRNA molecule binds across the dimer.

Its subcellular location is the cytoplasm. It carries out the reaction tRNA(Ser) + L-serine + ATP = L-seryl-tRNA(Ser) + AMP + diphosphate + H(+). It catalyses the reaction tRNA(Sec) + L-serine + ATP = L-seryl-tRNA(Sec) + AMP + diphosphate + H(+). Its pathway is aminoacyl-tRNA biosynthesis; selenocysteinyl-tRNA(Sec) biosynthesis; L-seryl-tRNA(Sec) from L-serine and tRNA(Sec): step 1/1. Catalyzes the attachment of serine to tRNA(Ser). Is also able to aminoacylate tRNA(Sec) with serine, to form the misacylated tRNA L-seryl-tRNA(Sec), which will be further converted into selenocysteinyl-tRNA(Sec). The protein is Serine--tRNA ligase of Francisella tularensis subsp. novicida (strain U112).